We begin with the raw amino-acid sequence, 238 residues long: Dolichyldiphosphatase 1 (238 aa).

4 helical membrane-spanning segments follow: residues 33 to 53, 100 to 120, 130 to 150, and 162 to 182; these read LAYL…LIIF, PSSH…FLYL, FLDL…AFLV, and WSQV…WFAF.

Belongs to the dolichyldiphosphatase family.

It localises to the endoplasmic reticulum membrane. The catalysed reaction is a di-trans,poly-cis-dolichyl diphosphate + H2O = a di-trans,poly-cis-dolichyl phosphate + phosphate + H(+). It functions in the pathway protein modification; protein glycosylation. Required for efficient N-glycosylation. Necessary for maintaining optimal levels of dolichol-linked oligosaccharides. Hydrolyzes dolichyl pyrophosphate at a very high rate and dolichyl monophosphate at a much lower rate. Does not act on phosphatidate. This is Dolichyldiphosphatase 1 (DOLPP1) from Rhinolophus ferrumequinum (Greater horseshoe bat).